Consider the following 302-residue polypeptide: Sulfate adenylyltransferase subunit 2 (302 aa).

Belongs to the PAPS reductase family. CysD subfamily. In terms of assembly, heterodimer composed of CysD, the smaller subunit, and CysN.

The catalysed reaction is sulfate + ATP + H(+) = adenosine 5'-phosphosulfate + diphosphate. Its pathway is sulfur metabolism; hydrogen sulfide biosynthesis; sulfite from sulfate: step 1/3. Functionally, with CysN forms the ATP sulfurylase (ATPS) that catalyzes the adenylation of sulfate producing adenosine 5'-phosphosulfate (APS) and diphosphate, the first enzymatic step in sulfur assimilation pathway. APS synthesis involves the formation of a high-energy phosphoric-sulfuric acid anhydride bond driven by GTP hydrolysis by CysN coupled to ATP hydrolysis by CysD. The chain is Sulfate adenylyltransferase subunit 2 from Salmonella agona (strain SL483).